We begin with the raw amino-acid sequence, 255 residues long: Aspartate/glutamate leucyltransferase (255 aa).

This sequence belongs to the R-transferase family. Bpt subfamily.

The protein resides in the cytoplasm. It catalyses the reaction N-terminal L-glutamyl-[protein] + L-leucyl-tRNA(Leu) = N-terminal L-leucyl-L-glutamyl-[protein] + tRNA(Leu) + H(+). It carries out the reaction N-terminal L-aspartyl-[protein] + L-leucyl-tRNA(Leu) = N-terminal L-leucyl-L-aspartyl-[protein] + tRNA(Leu) + H(+). Its function is as follows. Functions in the N-end rule pathway of protein degradation where it conjugates Leu from its aminoacyl-tRNA to the N-termini of proteins containing an N-terminal aspartate or glutamate. The polypeptide is Aspartate/glutamate leucyltransferase (Leptospira borgpetersenii serovar Hardjo-bovis (strain JB197)).